The primary structure comprises 521 residues: MTEFTNRLQKVASNPKAFKNTGRGIERETLRFTLDAALSSKPHPAGVGSALTHKYITTDFAESLLEFITPVSHDVKTVLKQLEDVHHYTVSHMGEEKLWPLSMPCFVSKDDDITLAQYGKSNVGQLKTTYREGLKRRYGSVMQVISGVHFNFSFSNEFWDELLGEQTEKDRQDSVSDAYFGLIRNYYRFGWLIPYFFGASPALCGSFIQGRETTMNFESLGKTLYLPYATSLRLSDLGYTNDAQSDLKISLNSIDEYIEGLNKAIRTPSEEFAKIGLKEGDKHIQLNANVLQIENELYAPIRPKRVAKSGEKPSEALERSGIEYIEVRSLDVNPFSPIGVDEDQVRFLDLFLTWSVLTDSAPMDDSEMACWKDNWNKIVELGRKPGLELQIGCQGERLTQKAWAERVFDDLFTIAKKMDAVNGDDAYQQTHQRLSAMIENPELTISGRLLAETKKAGGIGIIGCKLAIQHRQAHLDHKYSFYTKDELDAEVERSVLAQKEIEASDTMPFSEYLDDYFNYLK.

This sequence belongs to the glutamate--cysteine ligase type 1 family. Type 1 subfamily.

It carries out the reaction L-cysteine + L-glutamate + ATP = gamma-L-glutamyl-L-cysteine + ADP + phosphate + H(+). The protein operates within sulfur metabolism; glutathione biosynthesis; glutathione from L-cysteine and L-glutamate: step 1/2. In Aliivibrio salmonicida (strain LFI1238) (Vibrio salmonicida (strain LFI1238)), this protein is Glutamate--cysteine ligase.